Consider the following 353-residue polypeptide: Photosystem II D2 protein (353 aa).

T2 bears the N-acetylthreonine mark. Phosphothreonine is present on T2. A helical transmembrane segment spans residues 41–61 (CAYFAVGGWFTGTTFVTSWYT). Residue H118 coordinates chlorophyll a. A helical transmembrane segment spans residues 125–141 (GFMLRQFELARSVQLRP). Pheophytin a is bound by residues Q130 and N143. A helical transmembrane segment spans residues 153–166 (VFVSVFLIYPLGQS). Residue H198 coordinates chlorophyll a. A helical membrane pass occupies residues 208-228 (AALLCAIHGATVENTLFEDGD). A plastoquinone-binding residues include H215 and F262. H215 is a Fe cation binding site. Fe cation is bound at residue H269. A helical transmembrane segment spans residues 279-295 (GLWMSALGVVGLALNLR).

The protein belongs to the reaction center PufL/M/PsbA/D family. In terms of assembly, PSII is composed of 1 copy each of membrane proteins PsbA, PsbB, PsbC, PsbD, PsbE, PsbF, PsbH, PsbI, PsbJ, PsbK, PsbL, PsbM, PsbT, PsbX, PsbY, PsbZ, Psb30/Ycf12, at least 3 peripheral proteins of the oxygen-evolving complex and a large number of cofactors. It forms dimeric complexes. The D1/D2 heterodimer binds P680, chlorophylls that are the primary electron donor of PSII, and subsequent electron acceptors. It shares a non-heme iron and each subunit binds pheophytin, quinone, additional chlorophylls, carotenoids and lipids. There is also a Cl(-1) ion associated with D1 and D2, which is required for oxygen evolution. The PSII complex binds additional chlorophylls, carotenoids and specific lipids. serves as cofactor.

It localises to the plastid. The protein resides in the chloroplast thylakoid membrane. The catalysed reaction is 2 a plastoquinone + 4 hnu + 2 H2O = 2 a plastoquinol + O2. Its function is as follows. Photosystem II (PSII) is a light-driven water:plastoquinone oxidoreductase that uses light energy to abstract electrons from H(2)O, generating O(2) and a proton gradient subsequently used for ATP formation. It consists of a core antenna complex that captures photons, and an electron transfer chain that converts photonic excitation into a charge separation. The D1/D2 (PsbA/PsbD) reaction center heterodimer binds P680, the primary electron donor of PSII as well as several subsequent electron acceptors. D2 is needed for assembly of a stable PSII complex. This is Photosystem II D2 protein from Nicotiana tabacum (Common tobacco).